A 217-amino-acid chain; its full sequence is Ribonuclease HII (217 aa).

In terms of domain architecture, RNase H type-2 spans 27 to 216 (SQVAGVDEAG…VKESIQEGVC (190 aa)). Positions 33, 34, and 126 each coordinate a divalent metal cation.

Belongs to the RNase HII family. Mn(2+) is required as a cofactor. Mg(2+) serves as cofactor.

It is found in the cytoplasm. The enzyme catalyses Endonucleolytic cleavage to 5'-phosphomonoester.. Its function is as follows. Endonuclease that specifically degrades the RNA of RNA-DNA hybrids. The chain is Ribonuclease HII from Chlamydia trachomatis serovar L2 (strain ATCC VR-902B / DSM 19102 / 434/Bu).